The sequence spans 267 residues: MEMO1 family protein MM_1761 (267 aa).

Belongs to the MEMO1 family.

This is MEMO1 family protein MM_1761 from Methanosarcina mazei (strain ATCC BAA-159 / DSM 3647 / Goe1 / Go1 / JCM 11833 / OCM 88) (Methanosarcina frisia).